The following is a 431-amino-acid chain: Evolutionarily conserved signaling intermediate in Toll pathway, mitochondrial (431 aa).

A mitochondrion-targeting transit peptide spans Met-1–His-48. Lys-372 is covalently cross-linked (Glycyl lysine isopeptide (Lys-Gly) (interchain with G-Cter in ubiquitin)). Positions Leu-400–Ser-431 are disordered.

It belongs to the ECSIT family. In terms of assembly, interacts with MAP3K1, SMAD4 and TRAF6. Interacts with SMAD1 only after BMP4-treatment. Part of the mitochondrial complex I assembly/MCIA complex that comprises at least the core subunits TMEM126B, NDUFAF1, ECSIT and ACAD9 and complement subunits such as COA1 and TMEM186. Interacts with NDUFAF1. Interacts with ACAD9. Interacts with TRIM59. Interacts with TMEM70 and TMEM242. Interacts (when ubiquitinated) with NF-kappa-B subunits RELA and NFKB1. Interacts with RIGI, IFIT1 and MAVS; these interactions promote RLR-mediated type I IFN induction. Interacts with SQSTM1; this interaction inhibits TLR4 signaling via functional regulation of the TRAF6-ECSIT complex. Interacts with cereblon/CRBN; this interaction inhibits the ubiquitination of ECSIT. Ubiquitinated on Lys-372; leading to translocation in the nucleus together with RELA and NFKB1 and expression of NF-kappa-B-dependent genes.

Its subcellular location is the cytoplasm. The protein localises to the nucleus. The protein resides in the mitochondrion. In terms of biological role, adapter protein that plays a role in different signaling pathways including TLRs and IL-1 pathways or innate antiviral induction signaling. Plays a role in the activation of NF-kappa-B by forming a signal complex with TRAF6 and TAK1/MAP3K7 to activate TAK1/MAP3K7 leading to activation of IKKs. Once ubiquitinated, interacts with the dissociated RELA and NFKB1 proteins and translocates to the nucleus where it induces NF-kappa-B-dependent gene expression. Plays a role in innate antiviral immune response by bridging the pattern recognition receptors RIGI and MDA5/IFIT1 to the MAVS complex at the mitochondrion. Promotes proteolytic activation of MAP3K1. Involved in the BMP signaling pathway. Required for normal embryonic development. Functionally, as part of the MCIA complex, involved in the assembly of the mitochondrial complex I. The polypeptide is Evolutionarily conserved signaling intermediate in Toll pathway, mitochondrial (Homo sapiens (Human)).